Here is a 549-residue protein sequence, read N- to C-terminus: MARDATKLEATVAKLKKHWADSAPHDMRAAFKSDPGRFERYSLSLDDLLFDWSKCRVNDETIGLLKELAIAADVEGRRAAMFAGEHINNTEDRAVLHVALRDTSSKEVLVDGHNVLPDVKEVLDRMAAFADGIRSGAIKGATGKKITDIVNIGIGGSDLGPVMATLALSPYHDGPRAHFVSNIDGAHIADTLGILDPATTLVIIASKTFTTIETMTNAQTARKWVADALGEAAVGAHFAAVSTALDRVAAFGIAEDRVFGFWDWVGGRYSVWSAIGLPVMIAIGPEDFRKFLAGAHSMDVHFRDAPLEKNLAVWLGLIGYWHRAICGYGSRAIIPYDQRLARLPAYLQQLDMESNGKSVTVDGKPVSGPTGPVVWGEPGTNGQHAFFQLLHQGTDTIPLEFIVAAKGHEKHLDHQHEMLLANCLAQSEALMKGRTLDEARAQLKAKNLPESEVERIAPHRVFSGNRPSLTLVHDKLDPFALGRLVALYEHRVFVEAQIFGINAFDQWGVELGKELATELLPVVSGEESSDGRDASTQGLVAHLHARRKA.

The active-site Proton donor is E353. Active-site residues include H384 and K513.

This sequence belongs to the GPI family.

It is found in the cytoplasm. The catalysed reaction is alpha-D-glucose 6-phosphate = beta-D-fructose 6-phosphate. Its pathway is carbohydrate biosynthesis; gluconeogenesis. It participates in carbohydrate degradation; glycolysis; D-glyceraldehyde 3-phosphate and glycerone phosphate from D-glucose: step 2/4. Its function is as follows. Catalyzes the reversible isomerization of glucose-6-phosphate to fructose-6-phosphate. This Brucella anthropi (strain ATCC 49188 / DSM 6882 / CCUG 24695 / JCM 21032 / LMG 3331 / NBRC 15819 / NCTC 12168 / Alc 37) (Ochrobactrum anthropi) protein is Glucose-6-phosphate isomerase.